Reading from the N-terminus, the 726-residue chain is Ribonuclease R (726 aa).

One can recognise an RNB domain in the interval 264-592 (RKDLTELAFV…TVHRLLWMNL (329 aa)). One can recognise an S1 motif domain in the interval 645-726 (GQTFHGFISA…VQKRAILTLV (82 aa)).

Belongs to the RNR ribonuclease family. RNase R subfamily.

It is found in the cytoplasm. The catalysed reaction is Exonucleolytic cleavage in the 3'- to 5'-direction to yield nucleoside 5'-phosphates.. Its function is as follows. 3'-5' exoribonuclease that releases 5'-nucleoside monophosphates and is involved in maturation of structured RNAs. The sequence is that of Ribonuclease R from Mycoplasma pneumoniae (strain ATCC 29342 / M129 / Subtype 1) (Mycoplasmoides pneumoniae).